We begin with the raw amino-acid sequence, 316 residues long: Ornithine carbamoyltransferase (316 aa).

Carbamoyl phosphate contacts are provided by residues 59-62, Q86, R110, and 137-140; these read STRT and HPCQ. Residues N168, D232, and 236–237 each bind L-ornithine; that span reads SM. Carbamoyl phosphate is bound by residues 273–274 and R301; that span reads CL.

The protein belongs to the aspartate/ornithine carbamoyltransferase superfamily. OTCase family.

Its subcellular location is the cytoplasm. The enzyme catalyses carbamoyl phosphate + L-ornithine = L-citrulline + phosphate + H(+). The protein operates within amino-acid biosynthesis; L-arginine biosynthesis; L-arginine from L-ornithine and carbamoyl phosphate: step 1/3. Reversibly catalyzes the transfer of the carbamoyl group from carbamoyl phosphate (CP) to the N(epsilon) atom of ornithine (ORN) to produce L-citrulline. The chain is Ornithine carbamoyltransferase from Listeria monocytogenes serotype 4b (strain F2365).